The following is a 394-amino-acid chain: Subtilisin-like protease 4 (394 aa).

An N-terminal signal peptide occupies residues 1 to 17; the sequence is CLKTLSVFLAAFAAADA. Positions 18–116 are excised as a propeptide; the sequence is RAVFKTQGHK…VEQDQVVRIS (99 aa). The 80-residue stretch at 36 to 115 folds into the Inhibitor I9 domain; sequence YIVVMKDGVS…YVEQDQVVRI (80 aa). An N-linked (GlcNAc...) asparagine glycan is attached at N100. The Peptidase S8 domain occupies 126 to 394; sequence SWGLGRVSHR…STTNRLLYNG (269 aa). Catalysis depends on charge relay system residues D158 and H189. N-linked (GlcNAc...) asparagine glycosylation is found at N250 and N306. S344 (charge relay system) is an active-site residue.

The protein belongs to the peptidase S8 family.

It localises to the secreted. In terms of biological role, secreted subtilisin-like serine protease with keratinolytic activity that contributes to pathogenicity. The chain is Subtilisin-like protease 4 (SUB4) from Trichophyton equinum (Horse ringworm fungus).